Reading from the N-terminus, the 426-residue chain is Enolase (426 aa).

Glutamine 163 lines the (2R)-2-phosphoglycerate pocket. Glutamate 205 serves as the catalytic Proton donor. Positions 242, 283, and 310 each coordinate Mg(2+). Residues lysine 335, arginine 364, serine 365, and lysine 386 each coordinate (2R)-2-phosphoglycerate. Lysine 335 (proton acceptor) is an active-site residue.

The protein belongs to the enolase family. It depends on Mg(2+) as a cofactor.

It is found in the cytoplasm. The protein resides in the secreted. The protein localises to the cell surface. It catalyses the reaction (2R)-2-phosphoglycerate = phosphoenolpyruvate + H2O. Its pathway is carbohydrate degradation; glycolysis; pyruvate from D-glyceraldehyde 3-phosphate: step 4/5. Its function is as follows. Catalyzes the reversible conversion of 2-phosphoglycerate (2-PG) into phosphoenolpyruvate (PEP). It is essential for the degradation of carbohydrates via glycolysis. The chain is Enolase from Leifsonia xyli subsp. xyli (strain CTCB07).